The sequence spans 436 residues: Carboxypeptidase A5 (436 aa).

The signal sequence occupies residues 1–33; it reads MQGTPAGGTSPGPSPMDRQTLLVFSLILAAALG. Residues 34–126 constitute a propeptide, activation peptide; sequence QMNFTGDQVL…EREAMAKSRR (93 aa). The region spanning 138–431 is the Peptidase M14 domain; it reads SYHTLEEISS…MALRTIMEHT (294 aa). Zn(2+)-binding residues include His196 and Glu199. Substrate-binding positions include 196 to 199, Arg254, and 271 to 272; these read HSRE and NR. Cysteines 265 and 288 form a disulfide. His323 provides a ligand contact to Zn(2+). Substrate contacts are provided by residues 324–325 and Tyr375; that span reads SY. Glu397 functions as the Proton donor/acceptor in the catalytic mechanism.

The protein belongs to the peptidase M14 family. Zn(2+) serves as cofactor.

It is found in the secreted. This is Carboxypeptidase A5 (CPA5) from Macaca fascicularis (Crab-eating macaque).